The primary structure comprises 484 residues: Protein nucleotidyltransferase YdiU (484 aa).

8 residues coordinate ATP: Gly81, Gly83, Arg84, Lys103, Asp115, Gly116, Arg166, and Arg173. Asp244 serves as the catalytic Proton acceptor. Mg(2+)-binding residues include Asn245 and Asp254. Position 254 (Asp254) interacts with ATP.

The protein belongs to the SELO family. It depends on Mg(2+) as a cofactor. Requires Mn(2+) as cofactor.

The catalysed reaction is L-seryl-[protein] + ATP = 3-O-(5'-adenylyl)-L-seryl-[protein] + diphosphate. It carries out the reaction L-threonyl-[protein] + ATP = 3-O-(5'-adenylyl)-L-threonyl-[protein] + diphosphate. It catalyses the reaction L-tyrosyl-[protein] + ATP = O-(5'-adenylyl)-L-tyrosyl-[protein] + diphosphate. The enzyme catalyses L-histidyl-[protein] + UTP = N(tele)-(5'-uridylyl)-L-histidyl-[protein] + diphosphate. The catalysed reaction is L-seryl-[protein] + UTP = O-(5'-uridylyl)-L-seryl-[protein] + diphosphate. It carries out the reaction L-tyrosyl-[protein] + UTP = O-(5'-uridylyl)-L-tyrosyl-[protein] + diphosphate. Functionally, nucleotidyltransferase involved in the post-translational modification of proteins. It can catalyze the addition of adenosine monophosphate (AMP) or uridine monophosphate (UMP) to a protein, resulting in modifications known as AMPylation and UMPylation. The polypeptide is Protein nucleotidyltransferase YdiU (Shewanella baltica (strain OS195)).